The chain runs to 255 residues: Acetyl-coenzyme A carboxylase carboxyl transferase subunit alpha (255 aa).

The region spanning 1-235 (MNIAKIVREA…KKELQTELAR (235 aa)) is the CoA carboxyltransferase C-terminal domain.

It belongs to the AccA family. Acetyl-CoA carboxylase is a heterohexamer composed of biotin carboxyl carrier protein (AccB), biotin carboxylase (AccC) and two subunits each of ACCase subunit alpha (AccA) and ACCase subunit beta (AccD).

Its subcellular location is the cytoplasm. The catalysed reaction is N(6)-carboxybiotinyl-L-lysyl-[protein] + acetyl-CoA = N(6)-biotinyl-L-lysyl-[protein] + malonyl-CoA. It functions in the pathway lipid metabolism; malonyl-CoA biosynthesis; malonyl-CoA from acetyl-CoA: step 1/1. Functionally, component of the acetyl coenzyme A carboxylase (ACC) complex. First, biotin carboxylase catalyzes the carboxylation of biotin on its carrier protein (BCCP) and then the CO(2) group is transferred by the carboxyltransferase to acetyl-CoA to form malonyl-CoA. This chain is Acetyl-coenzyme A carboxylase carboxyl transferase subunit alpha, found in Streptococcus pneumoniae serotype 19F (strain G54).